The following is a 475-amino-acid chain: Secreted triacylglycerol lipase LIP5 (475 aa).

Residues 1 to 19 (MYPCTLLMVLLCLAIMTHG) form the signal peptide. Residues Cys129 and Cys300 are joined by a disulfide bond. The Nucleophile role is filled by Ser213. 2 N-linked (GlcNAc...) asparagine glycosylation sites follow: Asn246 and Asn312. Asp360 is a catalytic residue. The N-linked (GlcNAc...) asparagine glycan is linked to Asn369. His394 is a catalytic residue. A glycan (N-linked (GlcNAc...) asparagine) is linked at Asn471.

This sequence belongs to the AB hydrolase superfamily. Lipase family. Class Lip subfamily.

The catalysed reaction is a triacylglycerol + H2O = a diacylglycerol + a fatty acid + H(+). It carries out the reaction a monoacylglycerol + H2O = glycerol + a fatty acid + H(+). The enzyme catalyses a diacylglycerol + H2O = a monoacylglycerol + a fatty acid + H(+). In terms of biological role, secreted lipase involved in Dandruff and seborrheic dermatitis (D/SD) probably via lipase-mediated breakdown of sebaceous lipids and release of irritating free fatty acids. Has triacylglycerol lipase activity and is able to hydrolyze triolein. Mostly converts monoolein to di- and triolein, while free fatty acids are only produced in low amounts. In Malassezia globosa (strain ATCC MYA-4612 / CBS 7966) (Dandruff-associated fungus), this protein is Secreted triacylglycerol lipase LIP5.